An 855-amino-acid polypeptide reads, in one-letter code: RE1-silencing transcription factor (855 aa).

Residues 141–163 (FFCKPCQYQGENEQEFIVHIRTH) form a C2H2-type 1 zinc finger. The disordered stretch occupies residues 172–199 (NGGDSDEDLSADAGPQTSVPNAESAESN). Positions 186-199 (PQTSVPNAESAESN) are enriched in polar residues. C2H2-type zinc fingers lie at residues 204 to 226 (IRCERCGYNTNRFDHYMAHLKHH), 236 to 258 (FKCTICAYTTISQYHWKKHLRNH), 264 to 286 (FTCSQCSYFSDRKNNYIQHIRTH), 292 to 314 (FQCIYCEYSSSQKTHLTRHMRTH), 320 to 343 (FKCDNCSYLAANQHEVTRHARQVH), 349 to 371 (LSCPYCQYKTADRSNFKKHVELH), and 377 to 400 (FLCPVCKYAASKKCNLQYHIKSRH). The tract at residues 458 to 811 (NAVVETEKSS…ETPTEERDAS (354 aa)) is disordered. 3 stretches are compositionally biased toward basic and acidic residues: residues 462–472 (ETEKSSKKNMD), 481–496 (NEKKSSSKNDPKEKTA), and 504–535 (AVKDTEETQTEDTRVNNKKETKKAVKSAEKAL). Residues 548–569 (SSVQQQSDDCEQTQHTPQQNET) show a composition bias toward polar residues. The span at 570–580 (QENRPEKENRS) shows a compositional bias: basic and acidic residues. A compositionally biased stretch (basic residues) spans 594-604 (QTKKPCKKQTK). The segment covering 628–638 (RKAENPAEPKQ) has biased composition (basic and acidic residues). The segment covering 639-648 (RIKRTKKKKD) has biased composition (basic residues). The segment covering 652–662 (PTTSEANQTNP) has biased composition (polar residues). Basic and acidic residues-rich tracts occupy residues 711–721 (PAVEDVQRPLE) and 799–811 (KLPETPTEERDAS). The segment at 818 to 840 (HTCIFCDRSFALEMDYRKHLNRH) adopts a C2H2-type 9 zinc-finger fold.

It is found in the nucleus. The protein resides in the cytoplasm. Transcriptional repressor which binds neuron-restrictive silencer element (NRSE) and represses neuronal gene transcription in non-neuronal cells. In Danio rerio (Zebrafish), this protein is RE1-silencing transcription factor (rest).